A 189-amino-acid chain; its full sequence is Elongation factor P (189 aa).

It belongs to the elongation factor P family.

It localises to the cytoplasm. It functions in the pathway protein biosynthesis; polypeptide chain elongation. In terms of biological role, involved in peptide bond synthesis. Stimulates efficient translation and peptide-bond synthesis on native or reconstituted 70S ribosomes in vitro. Probably functions indirectly by altering the affinity of the ribosome for aminoacyl-tRNA, thus increasing their reactivity as acceptors for peptidyl transferase. The chain is Elongation factor P from Sinorhizobium medicae (strain WSM419) (Ensifer medicae).